Reading from the N-terminus, the 273-residue chain is Glutamate racemase (273 aa).

Substrate contacts are provided by residues 11–12 and 43–44; these read DS and YG. The active-site Proton donor/acceptor is the C74. 75–76 contributes to the substrate binding site; sequence NT. The active-site Proton donor/acceptor is the C185. 186-187 contributes to the substrate binding site; the sequence is TH.

It belongs to the aspartate/glutamate racemases family.

It carries out the reaction L-glutamate = D-glutamate. The protein operates within cell wall biogenesis; peptidoglycan biosynthesis. In terms of biological role, provides the (R)-glutamate required for cell wall biosynthesis. This is Glutamate racemase from Lactiplantibacillus plantarum (strain ATCC BAA-793 / NCIMB 8826 / WCFS1) (Lactobacillus plantarum).